The following is a 961-amino-acid chain: Valine--tRNA ligase (961 aa).

The short motif at 48 to 58 (PNVTGSLHMGH) is the 'HIGH' region element. The 'KMSKS' region motif lies at 560-564 (KMSKS). ATP is bound at residue Lys563. Residues 892–961 (FINKDTELAR…QAQFKAIEAL (70 aa)) are a coiled coil.

It belongs to the class-I aminoacyl-tRNA synthetase family. ValS type 1 subfamily. As to quaternary structure, monomer.

The protein localises to the cytoplasm. It catalyses the reaction tRNA(Val) + L-valine + ATP = L-valyl-tRNA(Val) + AMP + diphosphate. Catalyzes the attachment of valine to tRNA(Val). As ValRS can inadvertently accommodate and process structurally similar amino acids such as threonine, to avoid such errors, it has a 'posttransfer' editing activity that hydrolyzes mischarged Thr-tRNA(Val) in a tRNA-dependent manner. The sequence is that of Valine--tRNA ligase from Haemophilus ducreyi (strain 35000HP / ATCC 700724).